A 130-amino-acid chain; its full sequence is kinetoplast-associated protein 2-2 (130 aa).

Residues 1 to 10 (MLRRTVSNFA) constitute a propeptide that is removed on maturation. A disordered region spans residues 95–130 (ETKQAQRAKAQKAQKKPKSAKSKVKKAAKKAKKSKK). Positions 103–130 (KAQKAQKKPKSAKSKVKKAAKKAKKSKK) are enriched in basic residues.

The protein belongs to the KAP family. As to quaternary structure, associates with the kinetoplast DNA network.

The protein resides in the mitochondrion matrix. The protein localises to the kinetoplast. Functionally, histone H1-like DNA-binding protein involved in the organization and segregation of kinetoplast DNA (kDNA). The mitochondrial DNA of kinetoplastid protozoa consists of about 5,000 minicircles and 20 to 30 maxicircles. These circular DNAs are held together by catenation into a highly organized compact disk structure referred to as a kinetoplast DNA (kDNA) network. Binds preferentially to a specific fragment of minicircle DNA and is able to compact kDNA networks through DNA charge neutralization and condensation. The protein is kinetoplast-associated protein 2-2 (KAP2-2) of Crithidia fasciculata.